The primary structure comprises 221 residues: Transcription factor bHLH126 (221 aa).

Disordered stretches follow at residues Met1 to Leu46 and Arg104 to Ser132. The 53-residue stretch at Lys42–Thr94 folds into the bHLH domain.

As to quaternary structure, homodimer.

The protein localises to the nucleus. The chain is Transcription factor bHLH126 (BHLH126) from Arabidopsis thaliana (Mouse-ear cress).